A 318-amino-acid chain; its full sequence is NADH-ubiquinone oxidoreductase chain 1 (318 aa).

Helical transmembrane passes span Phe2–Leu22, Ile68–Pro88, Leu100–Gly120, Leu146–Ile166, His171–Ala191, Leu222–Phe242, Glu253–Val273, and Phe293–Gly313.

The protein belongs to the complex I subunit 1 family. In terms of assembly, core subunit of respiratory chain NADH dehydrogenase (Complex I) which is composed of 45 different subunits.

It is found in the mitochondrion inner membrane. It carries out the reaction a ubiquinone + NADH + 5 H(+)(in) = a ubiquinol + NAD(+) + 4 H(+)(out). Functionally, core subunit of the mitochondrial membrane respiratory chain NADH dehydrogenase (Complex I) which catalyzes electron transfer from NADH through the respiratory chain, using ubiquinone as an electron acceptor. Essential for the catalytic activity and assembly of complex I. The polypeptide is NADH-ubiquinone oxidoreductase chain 1 (MT-ND1) (Hipposideros diadema (Diadem leaf-nosed bat)).